The chain runs to 420 residues: Exodeoxyribonuclease 7 large subunit (420 aa).

This sequence belongs to the XseA family. As to quaternary structure, heterooligomer composed of large and small subunits.

It localises to the cytoplasm. The catalysed reaction is Exonucleolytic cleavage in either 5'- to 3'- or 3'- to 5'-direction to yield nucleoside 5'-phosphates.. Bidirectionally degrades single-stranded DNA into large acid-insoluble oligonucleotides, which are then degraded further into small acid-soluble oligonucleotides. The polypeptide is Exodeoxyribonuclease 7 large subunit (Helicobacter acinonychis (strain Sheeba)).